Consider the following 270-residue polypeptide: Shikimate dehydrogenase (NADP(+)) (270 aa).

Residues 14 to 16 and threonine 61 each bind shikimate; that span reads SKS. Lysine 65 (proton acceptor) is an active-site residue. The shikimate site is built by asparagine 86 and aspartate 101. NADP(+) contacts are provided by residues 126 to 130, 150 to 155, and methionine 215; these read GAGGA and NRTVDK. Tyrosine 217 serves as a coordination point for shikimate. Position 238 (glycine 238) interacts with NADP(+).

Belongs to the shikimate dehydrogenase family. Homodimer.

It catalyses the reaction shikimate + NADP(+) = 3-dehydroshikimate + NADPH + H(+). The protein operates within metabolic intermediate biosynthesis; chorismate biosynthesis; chorismate from D-erythrose 4-phosphate and phosphoenolpyruvate: step 4/7. In terms of biological role, involved in the biosynthesis of the chorismate, which leads to the biosynthesis of aromatic amino acids. Catalyzes the reversible NADPH linked reduction of 3-dehydroshikimate (DHSA) to yield shikimate (SA). The chain is Shikimate dehydrogenase (NADP(+)) from Methylobacillus flagellatus (strain ATCC 51484 / DSM 6875 / VKM B-1610 / KT).